The chain runs to 207 residues: Outer-membrane lipoprotein LolB (207 aa).

The first 21 residues, 1-21 (MPLPDFRLIRLLPLAALVLTA), serve as a signal peptide directing secretion. A lipid anchor (N-palmitoyl cysteine) is attached at C22. C22 carries the S-diacylglycerol cysteine lipid modification.

Belongs to the LolB family. In terms of assembly, monomer.

The protein resides in the cell outer membrane. Its function is as follows. Plays a critical role in the incorporation of lipoproteins in the outer membrane after they are released by the LolA protein. The sequence is that of Outer-membrane lipoprotein LolB from Escherichia coli O7:K1 (strain IAI39 / ExPEC).